The following is a 546-amino-acid chain: Probable protein kinase UbiB (546 aa).

Residues 124–502 form the Protein kinase domain; that stretch reads DFEIKPLASA…HVRQGQSRYF (379 aa). ATP-binding positions include 130–138 and K153; that span reads LASASIAQV. D288 serves as the catalytic Proton acceptor. Helical transmembrane passes span 501–521 and 522–542; these read YFLG…VSRP and EWGL…FVGW.

It belongs to the ABC1 family. UbiB subfamily.

Its subcellular location is the cell inner membrane. It functions in the pathway cofactor biosynthesis; ubiquinone biosynthesis [regulation]. Its function is as follows. Is probably a protein kinase regulator of UbiI activity which is involved in aerobic coenzyme Q (ubiquinone) biosynthesis. This Shigella boydii serotype 18 (strain CDC 3083-94 / BS512) protein is Probable protein kinase UbiB.